A 380-amino-acid polypeptide reads, in one-letter code: cAMP-dependent protein kinase type I-alpha regulatory subunit (380 aa).

An N-acetylmethionine modification is found at Met-1. Ala-2 carries the N-acetylalanine; in cAMP-dependent protein kinase type I-alpha regulatory subunit, N-terminally processed modification. The tract at residues 2 to 135 (ASGSTASEEE…ALAKAIEKNV (134 aa)) is dimerization and phosphorylation. 3 positions are modified to phosphoserine: Ser-3, Ser-76, and Ser-82. The segment at 64-96 (IQNLQKASARADSREDEISPPPPNPVVKGRRRR) is disordered. A Pseudophosphorylation motif motif is present at residues 95–99 (RRGAI). The residue at position 100 (Ser-100) is a Phosphoserine. Residues 136–253 (LFSH…SKVS), Glu-201, Arg-210, 254–380 (ILES…SLSV), Glu-325, and Arg-334 each bind 3',5'-cyclic AMP. Position 257 is a phosphoserine (Ser-257).

Belongs to the cAMP-dependent kinase regulatory chain family. The inactive holoenzyme is composed of two regulatory chains and two catalytic chains. Activation by cAMP releases the two active catalytic monomers and the regulatory dimer. Interacts with PRKACA and PRKACB. PRKAR1A also interacts with RFC2; the complex may be involved in cell survival. Interacts with AKAP4. Interacts with RARA; the interaction occurs in the presence of cAMP or FSH and regulates RARA transcriptional activity. Interacts with the phosphorylated form of PJA2. Interacts with CBFA2T3. Interacts with PRKX; regulates this cAMP-dependent protein kinase. Interacts with smAKAP; this interaction may target PRKAR1A to the plasma membrane. Interacts with AICDA. The pseudophosphorylation site binds to the substrate-binding region of the catalytic chain, resulting in the inhibition of its activity. As to expression, four types of regulatory chains are found: I-alpha, I-beta, II-alpha, and II-beta. Their expression varies among tissues and is in some cases constitutive and in others inducible.

The protein resides in the cell membrane. Functionally, regulatory subunit of the cAMP-dependent protein kinases involved in cAMP signaling in cells. This is cAMP-dependent protein kinase type I-alpha regulatory subunit (PRKAR1A) from Sus scrofa (Pig).